The primary structure comprises 215 residues: Adenylate kinase (215 aa).

ATP is bound at residue G10 to T15. Residues S30–V59 form an NMP region. Residues T31, R36, E57–V59, G85–R88, and Q92 contribute to the AMP site. Positions G126 to D162 are LID. Residue R127 coordinates ATP. The Zn(2+) site is built by C130 and C132. S135–Y136 lines the ATP pocket. Positions 149 and 152 each coordinate Zn(2+). AMP contacts are provided by R159 and R170. K198 is an ATP binding site.

Belongs to the adenylate kinase family. Monomer.

Its subcellular location is the cytoplasm. It carries out the reaction AMP + ATP = 2 ADP. The protein operates within purine metabolism; AMP biosynthesis via salvage pathway; AMP from ADP: step 1/1. Its function is as follows. Catalyzes the reversible transfer of the terminal phosphate group between ATP and AMP. Plays an important role in cellular energy homeostasis and in adenine nucleotide metabolism. In Methanosarcina acetivorans (strain ATCC 35395 / DSM 2834 / JCM 12185 / C2A), this protein is Adenylate kinase.